A 642-amino-acid chain; its full sequence is Wall-associated receptor kinase-like 6 (642 aa).

Positions 1–28 (MKKTKTYQVFCIAALSVLTLQLINGSSA) are cleaved as a signal peptide. The Extracellular portion of the chain corresponds to 29 to 357 (ATPPPPNSNS…PKITKPEKAS (329 aa)). Residues Asn-37, Asn-72, Asn-95, Asn-137, Asn-216, Asn-240, and Asn-276 are each glycosylated (N-linked (GlcNAc...) asparagine). An atypical EGF-like region spans residues 289 to 346 (CSCEYDYFSGMSYRICYCNYGYTGNPYLRHGCIDIDECEGHHNCGEGTCVNMPGTHSC). Cystine bridges form between Cys-291/Cys-304, Cys-326/Cys-337, and Cys-332/Cys-346. Residues 358 to 378 (VLQGVLISLGVLLFVLGILGL) form a helical membrane-spanning segment. Residues 379 to 642 (YKFIKKRTRI…KPLSRKRIGN (264 aa)) are Cytoplasmic-facing. The region spanning 432-642 (FSMNRVLGQG…KPLSRKRIGN (211 aa)) is the Protein kinase domain. Residues 438–446 (LGQGGQGTV) and Lys-460 each bind ATP. Tyr-505 is modified (phosphotyrosine). Asp-559 functions as the Proton acceptor in the catalytic mechanism. Thr-593 and Thr-598 each carry phosphothreonine. Tyr-606 bears the Phosphotyrosine mark.

This sequence belongs to the protein kinase superfamily. Ser/Thr protein kinase family. In terms of tissue distribution, slightly expressed in the whole plant.

The protein localises to the membrane. It carries out the reaction L-seryl-[protein] + ATP = O-phospho-L-seryl-[protein] + ADP + H(+). The catalysed reaction is L-threonyl-[protein] + ATP = O-phospho-L-threonyl-[protein] + ADP + H(+). Functionally, serine/threonine-protein kinase that may function as a signaling receptor of extracellular matrix component. This Arabidopsis thaliana (Mouse-ear cress) protein is Wall-associated receptor kinase-like 6 (WAKL6).